The primary structure comprises 299 residues: Pyridoxal 5'-phosphate synthase subunit PdxS (299 aa).

Residue Asp-24 coordinates D-ribose 5-phosphate. Catalysis depends on Lys-81, which acts as the Schiff-base intermediate with D-ribose 5-phosphate. Gly-153 is a D-ribose 5-phosphate binding site. Arg-165 provides a ligand contact to D-glyceraldehyde 3-phosphate. Residues Gly-219 and 240 to 241 contribute to the D-ribose 5-phosphate site; that span reads GS.

Belongs to the PdxS/SNZ family. In terms of assembly, in the presence of PdxT, forms a dodecamer of heterodimers.

It catalyses the reaction aldehydo-D-ribose 5-phosphate + D-glyceraldehyde 3-phosphate + L-glutamine = pyridoxal 5'-phosphate + L-glutamate + phosphate + 3 H2O + H(+). The protein operates within cofactor biosynthesis; pyridoxal 5'-phosphate biosynthesis. In terms of biological role, catalyzes the formation of pyridoxal 5'-phosphate from ribose 5-phosphate (RBP), glyceraldehyde 3-phosphate (G3P) and ammonia. The ammonia is provided by the PdxT subunit. Can also use ribulose 5-phosphate and dihydroxyacetone phosphate as substrates, resulting from enzyme-catalyzed isomerization of RBP and G3P, respectively. This Methanococcus aeolicus (strain ATCC BAA-1280 / DSM 17508 / OCM 812 / Nankai-3) protein is Pyridoxal 5'-phosphate synthase subunit PdxS.